A 158-amino-acid chain; its full sequence is Peptide deformylase (158 aa).

The Fe cation site is built by cysteine 88 and histidine 130. The active site involves glutamate 131. Position 134 (histidine 134) interacts with Fe cation.

This sequence belongs to the polypeptide deformylase family. It depends on Fe(2+) as a cofactor.

The enzyme catalyses N-terminal N-formyl-L-methionyl-[peptide] + H2O = N-terminal L-methionyl-[peptide] + formate. Functionally, removes the formyl group from the N-terminal Met of newly synthesized proteins. Requires at least a dipeptide for an efficient rate of reaction. N-terminal L-methionine is a prerequisite for activity but the enzyme has broad specificity at other positions. This chain is Peptide deformylase, found in Agathobacter rectalis (strain ATCC 33656 / DSM 3377 / JCM 17463 / KCTC 5835 / VPI 0990) (Eubacterium rectale).